A 155-amino-acid polypeptide reads, in one-letter code: Ribonuclease H (155 aa).

One can recognise an RNase H type-1 domain in the interval 1–146; that stretch reads MPELFAYTDG…ADELARAGMK (146 aa). Mg(2+) contacts are provided by Asp9, Glu52, Asp74, and Asp138.

It belongs to the RNase H family. As to quaternary structure, monomer. Requires Mg(2+) as cofactor.

Its subcellular location is the cytoplasm. It carries out the reaction Endonucleolytic cleavage to 5'-phosphomonoester.. Endonuclease that specifically degrades the RNA of RNA-DNA hybrids. The protein is Ribonuclease H of Ruegeria pomeroyi (strain ATCC 700808 / DSM 15171 / DSS-3) (Silicibacter pomeroyi).